Reading from the N-terminus, the 268-residue chain is ClpXP adapter protein SpxH (268 aa).

It belongs to the SpxH family. As to quaternary structure, interacts with Spx.

Its subcellular location is the cytoplasm. Functionally, adapter protein required for efficient degradation of Spx by ClpXP under non-stress conditions. Interaction with Spx stabilizes Spx and exposes the C-terminus of Spx for recognition and proteolysis by ClpXP. The polypeptide is ClpXP adapter protein SpxH (Staphylococcus aureus (strain Mu3 / ATCC 700698)).